The sequence spans 197 residues: Adenylyl-sulfate kinase (197 aa).

31–38 (GLSGAGKS) is an ATP binding site. Ser105 acts as the Phosphoserine intermediate in catalysis.

This sequence belongs to the APS kinase family.

It carries out the reaction adenosine 5'-phosphosulfate + ATP = 3'-phosphoadenylyl sulfate + ADP + H(+). Its pathway is sulfur metabolism; hydrogen sulfide biosynthesis; sulfite from sulfate: step 2/3. In terms of biological role, catalyzes the synthesis of activated sulfate. The chain is Adenylyl-sulfate kinase from Aeromonas hydrophila subsp. hydrophila (strain ATCC 7966 / DSM 30187 / BCRC 13018 / CCUG 14551 / JCM 1027 / KCTC 2358 / NCIMB 9240 / NCTC 8049).